The chain runs to 558 residues: MADIRLDIAPDLIHNGVPQRLSDTIILNNRPTITLLSHFNNLFHELNIVKAPHVASSQTTINLYIRFHLLTRLHHRLQTVETSTLPNITQFKDHIRSFFQNEHQPIFQTLTNNDLSEEFVGVTTFGLSLFATSKLDAEQIERVQIETLTEGNITLKPFSADGLEVILDDSYIGVVGKIPGLEVHKFLDKCCREVPAQMGILTDEVKLLMRTGKLRIDGGYDFNCPASTTDVTHYGGYDQFSRQMFERLNLFYNISLSIIPVSALKTVHLFEKELSVLDADKSLLEQTWSAVASFVETWQVKSKVKADDPDEYEMTSLSTLRTNYDGTSTSSPFTDKKFIDWYIKTFSKTEKGSSLRRNELEEKSASSISTTVKKVKIHFSVQYFDDFKVNGHEKSIVVQTHKGEMSLDYYRKIGEVLSAIWKRGKSLAVPCFDYIKLGVEKAFHLAPVIMKKYNLTIDDIINFIDKGPSYLAKLDKIDDCSLISKLIITSVLPNIIQRVYKTDPSNNVMNSVIISRANNLLKSDRDRVLKKALSANVSSSNTSSHEHTQKIVLNKVTR.

The disordered stretch occupies residues 539-558 (SSNTSSHEHTQKIVLNKVTR).

In Avena sativa (Oat), this protein is Protein S10 (S10).